We begin with the raw amino-acid sequence, 213 residues long: Protein-L-isoaspartate O-methyltransferase (213 aa).

Serine 64 is a catalytic residue.

This sequence belongs to the methyltransferase superfamily. L-isoaspartyl/D-aspartyl protein methyltransferase family.

The protein localises to the cytoplasm. It catalyses the reaction [protein]-L-isoaspartate + S-adenosyl-L-methionine = [protein]-L-isoaspartate alpha-methyl ester + S-adenosyl-L-homocysteine. Catalyzes the methyl esterification of L-isoaspartyl residues in peptides and proteins that result from spontaneous decomposition of normal L-aspartyl and L-asparaginyl residues. It plays a role in the repair and/or degradation of damaged proteins. The protein is Protein-L-isoaspartate O-methyltransferase of Christiangramia forsetii (strain DSM 17595 / CGMCC 1.15422 / KT0803) (Gramella forsetii).